A 203-amino-acid polypeptide reads, in one-letter code: FMN-dependent NADH:quinone oxidoreductase (203 aa).

Residues Ser-9, Ser-15–Ser-17, and Thr-139–Gly-142 each bind FMN.

The protein belongs to the azoreductase type 1 family. Homodimer. FMN serves as cofactor.

It carries out the reaction 2 a quinone + NADH + H(+) = 2 a 1,4-benzosemiquinone + NAD(+). The enzyme catalyses N,N-dimethyl-1,4-phenylenediamine + anthranilate + 2 NAD(+) = 2-(4-dimethylaminophenyl)diazenylbenzoate + 2 NADH + 2 H(+). In terms of biological role, quinone reductase that provides resistance to thiol-specific stress caused by electrophilic quinones. Functionally, also exhibits azoreductase activity. Catalyzes the reductive cleavage of the azo bond in aromatic azo compounds to the corresponding amines. The chain is FMN-dependent NADH:quinone oxidoreductase from Albidiferax ferrireducens (strain ATCC BAA-621 / DSM 15236 / T118) (Rhodoferax ferrireducens).